An 821-amino-acid polypeptide reads, in one-letter code: Leucine--tRNA ligase (821 aa).

A 'HIGH' region motif is present at residues 44–54 (PYPSGRIHMGH). The 'KMSKS' region motif lies at 589-593 (KMSKS). Residue K592 participates in ATP binding.

It belongs to the class-I aminoacyl-tRNA synthetase family.

The protein resides in the cytoplasm. The catalysed reaction is tRNA(Leu) + L-leucine + ATP = L-leucyl-tRNA(Leu) + AMP + diphosphate. The sequence is that of Leucine--tRNA ligase from Campylobacter curvus (strain 525.92).